Reading from the N-terminus, the 948-residue chain is RNA polymerase-associated protein RapA (948 aa).

A Helicase ATP-binding domain is found at 164–332 (EVADRSAPRV…FARLRLLDPN (169 aa)). 177 to 184 (DEVGLGKT) contacts ATP. A DEAH box motif is present at residues 278–281 (DEAH). Residues 473–627 (RVDWLIDTLK…TCPTGNALQH (155 aa)) enclose the Helicase C-terminal domain.

The protein belongs to the SNF2/RAD54 helicase family. RapA subfamily. In terms of assembly, interacts with the RNAP. Has a higher affinity for the core RNAP than for the holoenzyme. Its ATPase activity is stimulated by binding to RNAP.

In terms of biological role, transcription regulator that activates transcription by stimulating RNA polymerase (RNAP) recycling in case of stress conditions such as supercoiled DNA or high salt concentrations. Probably acts by releasing the RNAP, when it is trapped or immobilized on tightly supercoiled DNA. Does not activate transcription on linear DNA. Probably not involved in DNA repair. The chain is RNA polymerase-associated protein RapA from Pseudomonas putida (strain ATCC 47054 / DSM 6125 / CFBP 8728 / NCIMB 11950 / KT2440).